A 129-amino-acid polypeptide reads, in one-letter code: MEEGEAKKTGLEGTGLSLPGSSHGNLRSAGSDQQLKQMLDSLKSSKSPAVINYGASWCRVCSQILPPFCRFSNEFKNLTFIYADIDECPETTQNIRYTPTFHFYRDGEKVDEMLGTGEERLHDRLWLHS.

The segment covering 1–10 (MEEGEAKKTG) has biased composition (basic and acidic residues). The disordered stretch occupies residues 1 to 30 (MEEGEAKKTGLEGTGLSLPGSSHGNLRSAG). In terms of domain architecture, Thioredoxin spans 7-129 (KKTGLEGTGL…RLHDRLWLHS (123 aa)). The segment covering 19 to 30 (PGSSHGNLRSAG) has biased composition (polar residues). Active-site nucleophile residues include Cys-58 and Cys-61. Cys-58 and Cys-61 are oxidised to a cystine.

It belongs to the thioredoxin family.

Its function is as follows. Probable thiol-disulfide oxidoreductase that may participate in various redox reactions. The protein is Thioredoxin-like 3-3 of Oryza sativa subsp. japonica (Rice).